Here is an 89-residue protein sequence, read N- to C-terminus: Small ribosomal subunit protein uS17 (89 aa).

This sequence belongs to the universal ribosomal protein uS17 family. Part of the 30S ribosomal subunit.

Its function is as follows. One of the primary rRNA binding proteins, it binds specifically to the 5'-end of 16S ribosomal RNA. This Bacteroides fragilis (strain ATCC 25285 / DSM 2151 / CCUG 4856 / JCM 11019 / LMG 10263 / NCTC 9343 / Onslow / VPI 2553 / EN-2) protein is Small ribosomal subunit protein uS17.